We begin with the raw amino-acid sequence, 379 residues long: 8-amino-7-oxononanoate synthase (379 aa).

Positions 27 and 34 each coordinate substrate. 114–115 (GY) is a binding site for pyridoxal 5'-phosphate. A substrate-binding site is contributed by His-139. Pyridoxal 5'-phosphate is bound by residues Ser-187, 212–215 (DDAH), and 232–235 (TLSK). Lys-235 is subject to N6-(pyridoxal phosphate)lysine. A substrate-binding site is contributed by Thr-344.

This sequence belongs to the class-II pyridoxal-phosphate-dependent aminotransferase family. BioF subfamily. In terms of assembly, homodimer. It depends on pyridoxal 5'-phosphate as a cofactor.

The catalysed reaction is 6-carboxyhexanoyl-[ACP] + L-alanine + H(+) = (8S)-8-amino-7-oxononanoate + holo-[ACP] + CO2. It participates in cofactor biosynthesis; biotin biosynthesis. Functionally, catalyzes the decarboxylative condensation of pimeloyl-[acyl-carrier protein] and L-alanine to produce 8-amino-7-oxononanoate (AON), [acyl-carrier protein], and carbon dioxide. This chain is 8-amino-7-oxononanoate synthase, found in Methylobacterium nodulans (strain LMG 21967 / CNCM I-2342 / ORS 2060).